A 312-amino-acid polypeptide reads, in one-letter code: Small ribosomal subunit protein uS2m (312 aa).

The protein belongs to the universal ribosomal protein uS2 family.

Its subcellular location is the mitochondrion. The polypeptide is Small ribosomal subunit protein uS2m (RPS2) (Acanthamoeba castellanii (Amoeba)).